The following is a 515-amino-acid chain: G-protein coupled receptor 176 (515 aa).

Polar residues predominate over residues 1–16 (MGHNGSWISPNASEPH). Residues 1-20 (MGHNGSWISPNASEPHNASG) are disordered. Topologically, residues 1 to 42 (MGHNGSWISPNASEPHNASGAEAAGVNRSALGEFGEAQLYRQ) are extracellular. Residues asparagine 4, asparagine 11, asparagine 17, and asparagine 27 are each glycosylated (N-linked (GlcNAc...) asparagine). The helical transmembrane segment at 43–63 (FTTTVQVVIFIGSLLGNFMVL) threads the bilayer. At 64-82 (WSTCRTTVFKSVTNRFIKN) the chain is on the cytoplasmic side. The chain crosses the membrane as a helical span at residues 83 to 103 (LACSGICASLVCVPFDIILST). Topologically, residues 104-118 (SPHCCWWIYTMLFCK) are extracellular. The helical transmembrane segment at 119–139 (VVKFLHKVFCSVTILSFPAIA) threads the bilayer. Residues 140-160 (LDRYYSVLYPLERKISDAKSR) lie on the Cytoplasmic side of the membrane. Residues 161 to 181 (ELVMYIWAHAVVASVPVFAVT) traverse the membrane as a helical segment. At 182–207 (NVADIYATSTCTEVWSNSLGHLVYVL) the chain is on the extracellular side. Residues 208–228 (VYNITTVIVPVVVVFLFLILI) form a helical membrane-spanning segment. The Cytoplasmic segment spans residues 229-267 (RRALSASQKKKVIIAALRTPQNTISIPYASQREAELHAT). Residues 268-288 (LLSMVMVFILCSVPYATLVVY) form a helical membrane-spanning segment. Residues 289 to 299 (QTVLNVPDTSV) lie on the Extracellular side of the membrane. Residues 300 to 320 (FLLLTAVWLPKVSLLANPVLF) form a helical membrane-spanning segment. Residues 321-515 (LTVNKSVRKC…KVSIFPKVDS (195 aa)) lie on the Cytoplasmic side of the membrane.

Belongs to the G-protein coupled receptor 1 family.

It is found in the cell membrane. Its function is as follows. Orphan receptor involved in normal circadian rhythm behavior. Acts through the G-protein subclass G(z)-alpha and has an agonist-independent basal activity to repress cAMP production. This chain is G-protein coupled receptor 176 (GPR176), found in Homo sapiens (Human).